Consider the following 120-residue polypeptide: Cell division protein FtsL (120 aa).

The Cytoplasmic segment spans residues 1 to 36; sequence MTNLAVKYKQQAQEEVQIQTPPQQMAKPKVKAKITR. The helical transmembrane segment at 37–57 threads the bilayer; the sequence is IEKLLYVAFIGFLLYACVAFI. Residues 58–120 are Extracellular-facing; the sequence is GNKAGLYQVN…INANNVKGLK (63 aa).

The protein belongs to the FtsL family.

Its subcellular location is the cell membrane. Essential cell division protein. In Bacillus cereus (strain ATCC 14579 / DSM 31 / CCUG 7414 / JCM 2152 / NBRC 15305 / NCIMB 9373 / NCTC 2599 / NRRL B-3711), this protein is Cell division protein FtsL.